The sequence spans 269 residues: Surfeit locus protein 4 (269 aa).

5 consecutive transmembrane segments (helical) span residues 65–85, 92–112, 179–199, 203–223, and 242–262; these read LASS…VLVL, YACF…SILW, FFSI…AIGF, LAAL…NAFW, and TMSV…GVSM. The short motif at 266-269 is the Di-lysine motif element; it reads KKEW.

It belongs to the SURF4 family. Found in a complex composed at least of SURF4, TMED2 and TMED10. May interact with LMAN1. Interacts with ZFYVE27 and with KIF5A in a ZFYVE27-dependent manner. Interacts with STING1. Interacts with SAR1B. Interacts with TMEM41B.

The protein localises to the endoplasmic reticulum membrane. It is found in the endoplasmic reticulum-Golgi intermediate compartment membrane. It localises to the golgi apparatus membrane. Endoplasmic reticulum cargo receptor that mediates the export of lipoproteins by recruiting cargos into COPII vesicles to facilitate their secretion. Acts as a cargo receptor for lipoproteins bearing both APOB and APOA1, thereby regulating lipoprotein delivery and the maintenance of lipid homeostasis. Synergizes with the GTPase SAR1B to mediate transport of circulating lipoproteins. Promotes the secretion of PCSK9. Also mediates the efficient secretion of erythropoietin (EPO). May also play a role in the maintenance of the architecture of the endoplasmic reticulum-Golgi intermediate compartment and of the Golgi. This Mus musculus (Mouse) protein is Surfeit locus protein 4.